The sequence spans 236 residues: Uridylate kinase (236 aa).

An ATP-binding site is contributed by 10-11 (GS). Position 44 (Gly-44) interacts with UMP. 2 residues coordinate ATP: Gly-45 and Arg-49. UMP contacts are provided by residues Asp-66 and 114–120 (ITPGQTT). ATP is bound by residues Thr-140, Tyr-146, and Asp-149.

This sequence belongs to the UMP kinase family. As to quaternary structure, homohexamer.

Its subcellular location is the cytoplasm. It carries out the reaction UMP + ATP = UDP + ADP. The protein operates within pyrimidine metabolism; CTP biosynthesis via de novo pathway; UDP from UMP (UMPK route): step 1/1. Its activity is regulated as follows. Inhibited by UTP. In terms of biological role, catalyzes the reversible phosphorylation of UMP to UDP. This is Uridylate kinase from Methanospirillum hungatei JF-1 (strain ATCC 27890 / DSM 864 / NBRC 100397 / JF-1).